The chain runs to 149 residues: Protein AE7-like 2 (149 aa).

Belongs to the MIP18 family.

In terms of biological role, may play a role in chromosome segregation through establishment of sister chromatid cohesion. Unable to complement ae7 mutants, and thus probably not involved in the cytosolic iron-sulfur assembly (CIA) pathway. This is Protein AE7-like 2 from Arabidopsis thaliana (Mouse-ear cress).